The primary structure comprises 458 residues: Vasoactive intestinal polypeptide receptor 1 (458 aa).

The N-terminal stretch at 1–31 (MRPLSPPPAGWFCVLAGVLACVLGPVGSWAV) is a signal peptide. Residues 32-142 (GLQQEECDYL…DEQQTVFYNS (111 aa)) lie on the Extracellular side of the membrane. Disulfide bonds link Cys38–Cys209, Cys51–Cys73, Cys64–Cys106, Cys87–Cys123, and Cys216–Cys286. Residues Asn59, Asn70, Asn101, and Asn105 are each glycosylated (N-linked (GlcNAc...) asparagine). A helical membrane pass occupies residues 143–167 (VKTGYTIGYSLSLAALLVATAILSL). The Cytoplasmic segment spans residues 168–175 (FRKLHCTR). Residues 176–197 (NYIHMHLFISFILRATAVFIKD) traverse the membrane as a helical segment. Residues 198-217 (LALFDSEESDHCSKGSVGCK) are Extracellular-facing. Residues 218–242 (AAVVLFQYCVMANFFWLLVEGLYLH) form a helical membrane-spanning segment. Topologically, residues 243-255 (TLLAVSFFSERKY) are cytoplasmic. Residues 256 to 277 (FWGYIFVGWGVPSTFIMVWTVV) traverse the membrane as a helical segment. At 278-292 (RIHFEDYGCWDTIHS) the chain is on the extracellular side. The helical transmembrane segment at 293–317 (SLWWIIKAPILASILVNFILFIRII) threads the bilayer. The Cytoplasmic portion of the chain corresponds to 318–339 (GILVQKLRPPDVGKSDNSPYSR). The chain crosses the membrane as a helical span at residues 340–360 (LAKSTLLLIPLFGVHYIMFAF). At 361–368 (FPDNFKAE) the chain is on the extracellular side. A helical membrane pass occupies residues 369–392 (VKMVFELIVGSFQGCVVAILYCFL). Residues 393-458 (NGEVQAELRR…SSFQAEVSLV (66 aa)) lie on the Cytoplasmic side of the membrane.

The protein belongs to the G-protein coupled receptor 2 family. In terms of assembly, interacts with ADCYAP1/PACAP; activated by both PACAP27 and PACAP38 neuropeptides. Interacts with VIP; the interaction results in VIPR1 activation.

Its subcellular location is the cell membrane. In terms of biological role, g protein-coupled receptor activated by the neuropeptides vasoactive intestinal peptide (VIP) and pituitary adenylate cyclase-activating polypeptide (ADCYAP1/PACAP). Binds VIP and both PACAP27 and PACAP38 bioactive peptides with the following order of ligand affinity VIP = PACAP27 &gt; PACAP38. Ligand binding causes a conformation change that triggers signaling via guanine nucleotide-binding proteins (G proteins) and modulates the activity of downstream effectors. Activates cAMP-dependent pathway. The chain is Vasoactive intestinal polypeptide receptor 1 (VIPR1) from Sus scrofa (Pig).